Consider the following 202-residue polypeptide: Response regulator RamR (202 aa).

The response regulatory stretch occupies residues 1–121 (MGEMVRIAVV…LITAVHTVAR (121 aa)). Residues 135–200 (LKGAEMPLTT…DAIRIVQSAG (66 aa)) enclose the HTH luxR-type domain. Residues 159-178 (IAEIAARLHLSRGTVRNYMA) constitute a DNA-binding region (H-T-H motif).

Homodimer, in the absence of phosphorylation. In terms of processing, may be phosphorylated by an unknown kinase, probably on Asp-56.

A transcription factor required for aerial hyphae formation on rich medium. Activates transcription of ramC. Might be part of a two-component regulatory system. Binds the promoter of ramC. Non-phosphorylated protein cooperatively binds multiple sites in the ramC promoter. Has not been seen to autophosphorylate using the small molecule phosphodonors phosphoramidate, acetyl phosphate or carbamoyl phosphate. Upon low expression suppresses the bald (bld, no aerial hyphae) phenotype of citA but not bldJ mutants; higher expression also suppresses the bldJ mutant as well as several other bld mutations, inducing SapB production even on media where SapB is normally not produced. Expression of the ram locus (ramA, ramB and ramR) induces rapid aerial mycelium formation in S.lividans. Overexpression suppresses the no aerial hyphae phenotype of a chaplin-negative strain, probably by inducing expression of SapB. Overexpression of RamR show there are about 280 genes having at least a threefold increase or fourfold decrease in RNA abundance versus wild-type including gene cluster SCO4072-SCO4075. The protein is Response regulator RamR of Streptomyces coelicolor (strain ATCC BAA-471 / A3(2) / M145).